A 475-amino-acid polypeptide reads, in one-letter code: Pentatricopeptide repeat-containing protein At1g29710, mitochondrial (475 aa).

A mitochondrion-targeting transit peptide spans 1–37; it reads MVRLWCGKLRLWKPYLALATQSRNSWFCSGGGAPSHH. PPR repeat units follow at residues 83–117, 118–148, 153–183, 184–218, 219–254, and 255–285; these read AQNV…GYAM, DLIR…IIAL, DVGA…MPEW, NSGT…GNKP, NGEI…GIVP, and SMEH…MPME. A type E(+) motif region spans residues 350–380; the sequence is YFYSTFRPVDSSHPQMNIIYETLMSLRSQLK. The interval 381-475 is type DYW motif; the sequence is EMGYVPDTRY…NGVCRCNNLW (95 aa).

This sequence belongs to the PPR family. PCMP-H subfamily.

The protein localises to the mitochondrion. This Arabidopsis thaliana (Mouse-ear cress) protein is Pentatricopeptide repeat-containing protein At1g29710, mitochondrial (PCMP-H67).